The sequence spans 336 residues: UDP-glucose 4-epimerase (336 aa).

Residues 11–12 (YI), 31–36 (DNLINS), 58–59 (DI), 80–84 (FAGLK), Asn-99, Ser-124, Tyr-149, Lys-153, and Phe-178 contribute to the NAD(+) site. The substrate site is built by Ser-124 and Tyr-149. The Proton acceptor role is filled by Tyr-149. Substrate-binding positions include Asn-179, 199 to 200 (NL), 216 to 218 (LVY), Arg-231, and 290 to 293 (RPGD).

The protein belongs to the NAD(P)-dependent epimerase/dehydratase family. As to quaternary structure, homodimer. Requires NAD(+) as cofactor.

The enzyme catalyses UDP-alpha-D-glucose = UDP-alpha-D-galactose. It functions in the pathway carbohydrate metabolism; galactose metabolism. Involved in the metabolism of galactose. Catalyzes the conversion of UDP-galactose (UDP-Gal) to UDP-glucose (UDP-Glc) through a mechanism involving the transient reduction of NAD. This chain is UDP-glucose 4-epimerase (galE), found in Yersinia enterocolitica.